The primary structure comprises 358 residues: Sesquiterpene synthase Agr3 (358 aa).

Positions 99, 246, 250, and 254 each coordinate Mg(2+). Positions 99–103 match the DDXXD motif motif; sequence DNISD. (2E,6E)-farnesyl diphosphate-binding residues include R334 and Y335.

Belongs to the terpene synthase family. Mg(2+) serves as cofactor.

The enzyme catalyses (2E,6E)-farnesyl diphosphate = alpha-muurolene + diphosphate. The catalysed reaction is (2E,6E)-farnesyl diphosphate = gamma-muurolene + diphosphate. It catalyses the reaction (2E,6E)-farnesyl diphosphate = delta-cadinene + diphosphate. In terms of biological role, terpene cyclase that catalyzes the cyclization of farnesyl diphosphate (FPP) to various sesquiterpenes, including alpha-muurolene, gamma-muurolene, germacrene, delta-cadinene, delta-cadinol and cubenol. The sequence is that of Sesquiterpene synthase Agr3 from Cyclocybe aegerita (Black poplar mushroom).